Here is a 152-residue protein sequence, read N- to C-terminus: Large ribosomal subunit protein uL22 (152 aa).

Residues 124–145 (APKKAAAKKAAPAKETTPAATE) are compositionally biased toward low complexity. The segment at 124–152 (APKKAAAKKAAPAKETTPAATESKTEGAE) is disordered.

This sequence belongs to the universal ribosomal protein uL22 family. Part of the 50S ribosomal subunit.

Functionally, this protein binds specifically to 23S rRNA; its binding is stimulated by other ribosomal proteins, e.g. L4, L17, and L20. It is important during the early stages of 50S assembly. It makes multiple contacts with different domains of the 23S rRNA in the assembled 50S subunit and ribosome. The globular domain of the protein is located near the polypeptide exit tunnel on the outside of the subunit, while an extended beta-hairpin is found that lines the wall of the exit tunnel in the center of the 70S ribosome. The sequence is that of Large ribosomal subunit protein uL22 from Salinispora tropica (strain ATCC BAA-916 / DSM 44818 / JCM 13857 / NBRC 105044 / CNB-440).